A 196-amino-acid polypeptide reads, in one-letter code: MEKFIKHTGVGVPLQRSNVDTDQIIPAVYLKRVTRTGFEDGLFSNWRKNDPDFVLNQDTYKNGSVLIAGPDFGTGSSREHAVWALMDYGFRAVFSSRFADIFRGNSGKAGLLTGIMEQSDIELLWKLMEQTPGLEMTVDLENQTVVAGDTVISFEVDPYIRWRLMEGLDDVGLTLRKVDEIEAYEAKRPAFKPSAL.

It belongs to the LeuD family. LeuD type 1 subfamily. Heterodimer of LeuC and LeuD.

It catalyses the reaction (2R,3S)-3-isopropylmalate = (2S)-2-isopropylmalate. It functions in the pathway amino-acid biosynthesis; L-leucine biosynthesis; L-leucine from 3-methyl-2-oxobutanoate: step 2/4. Catalyzes the isomerization between 2-isopropylmalate and 3-isopropylmalate, via the formation of 2-isopropylmaleate. This is 3-isopropylmalate dehydratase small subunit from Corynebacterium efficiens (strain DSM 44549 / YS-314 / AJ 12310 / JCM 11189 / NBRC 100395).